We begin with the raw amino-acid sequence, 585 residues long: MYALLSVYDKTGLLELAKALTSKGVKLLGSGGTAKMIRESGMEVADVSSITNAPEILGGRVKTLHPAVHGGILARDIPSDEKDLVEQSIEKIDIVVCNLYPFRETIAKPNVTIPEAVEEIDIGGVTLLRAAAKNHARVTILSDPADYATFTDKFLSDKLTQDDRNTYALKAFASTASYDAAITDYFRKQYAAGVDQLTLRYGANPHQSPAQAFMEQGPLPFKVLCGSPGYINLMDALNSWPLVKELRENIGIPAAASFKHVSPAGAAVGLPLSDVEKKVYFVSDITEFTPLACAYARARGADRMSSFGDFIALSDTVDVCTARIISREVSDGVIAPGYEPEALELLKKKKGGKYCVLQMDPKYVPAEIETRQVYGISLQQHRNHAKIDFSLFEKVVSKNKDLPKSALIDLVIATTALKYTQSNSVCYAKNGMVVGLGAGQQSRIHCNRLAGDKADNWWLRHHPKVLGMQFKKSAKRPEKSNAIDLYVLDAVPAEGSEREQWESAFETIPEPLTKKEREEFLATCKDVVCASDAFFPFPDNIYRLAQSGVKYVAAPGGSVMDQAVRDTANEFNMVFSEIPLRLFHH.

Residues 1–142 (MYALLSVYDK…KNHARVTILS (142 aa)) enclose the MGS-like domain. IMP contacts are provided by residues 30–33 (SGGT), 60–63 (RVKT), 97–98 (CN), and 121–122 (DI). Lysine 133 acts as the Proton donor/acceptor; for FAICAR cyclization activity in catalysis. 5-amino-1-(5-phospho-beta-D-ribosyl)imidazole-4-carboxamide is bound by residues 200-201 (RY), histidine 260, glycine 308, aspartate 331, asparagine 423, and arginine 443. Catalysis depends on histidine 260, which acts as the Proton acceptor; for AICAR formyltransferase activity. Isoleucine 444 is a binding site for (6R)-10-formyltetrahydrofolate. Phenylalanine 534 provides a ligand contact to 5-amino-1-(5-phospho-beta-D-ribosyl)imidazole-4-carboxamide. Residues aspartate 539 and 558-559 (SV) each bind (6R)-10-formyltetrahydrofolate. Arginine 581 provides a ligand contact to 5-amino-1-(5-phospho-beta-D-ribosyl)imidazole-4-carboxamide.

Belongs to the PurH family. In terms of assembly, homodimer.

It is found in the cytoplasm. Its subcellular location is the cytosol. The catalysed reaction is (6R)-10-formyltetrahydrofolate + 5-amino-1-(5-phospho-beta-D-ribosyl)imidazole-4-carboxamide = 5-formamido-1-(5-phospho-D-ribosyl)imidazole-4-carboxamide + (6S)-5,6,7,8-tetrahydrofolate. The enzyme catalyses IMP + H2O = 5-formamido-1-(5-phospho-D-ribosyl)imidazole-4-carboxamide. Its pathway is purine metabolism; IMP biosynthesis via de novo pathway; 5-formamido-1-(5-phospho-D-ribosyl)imidazole-4-carboxamide from 5-amino-1-(5-phospho-D-ribosyl)imidazole-4-carboxamide (10-formyl THF route): step 1/1. It participates in purine metabolism; IMP biosynthesis via de novo pathway; IMP from 5-formamido-1-(5-phospho-D-ribosyl)imidazole-4-carboxamide: step 1/1. Its function is as follows. Bifunctional enzyme that catalyzes the last two steps of purine biosynthesis. Acts as a transformylase that incorporates a formyl group to the AMP analog AICAR (5-amino-1-(5-phospho-beta-D-ribosyl)imidazole-4-carboxamide) to produce the intermediate formyl-AICAR (FAICAR). Also catalyzes the cyclization of FAICAR to IMP. This Schizosaccharomyces pombe (strain 972 / ATCC 24843) (Fission yeast) protein is Bifunctional purine biosynthesis protein ade10 (ade10).